The chain runs to 379 residues: Galactose-1-phosphate uridylyltransferase (379 aa).

Over residues 1–15 (MSQSGADPEQRQQAS) the composition is skewed to polar residues. The segment at 1–20 (MSQSGADPEQRQQASEADAM) is disordered. Cys-75 contributes to the Zn(2+) binding site. Residues Ala-81, 97–98 (ND), and Asn-173 each bind UDP-alpha-D-glucose. His-184 serves as a coordination point for Zn(2+). Catalysis depends on His-186, which acts as the Tele-UMP-histidine intermediate. Gln-188 is a UDP-alpha-D-glucose binding site. Zn(2+) is bound by residues Glu-202, His-301, His-319, and His-321. Residues 334–337 (KFMV) and 339–340 (YE) each bind UDP-alpha-D-glucose.

This sequence belongs to the galactose-1-phosphate uridylyltransferase type 1 family. In terms of assembly, homodimer. Zn(2+) serves as cofactor.

It catalyses the reaction alpha-D-galactose 1-phosphate + UDP-alpha-D-glucose = alpha-D-glucose 1-phosphate + UDP-alpha-D-galactose. The protein operates within carbohydrate metabolism; galactose metabolism. Its function is as follows. Plays an important role in galactose metabolism. This chain is Galactose-1-phosphate uridylyltransferase (Galt), found in Rattus norvegicus (Rat).